A 271-amino-acid chain; its full sequence is Putative phosphoenolpyruvate synthase regulatory protein (271 aa).

ADP is bound at residue 151 to 158 (GVSRSGKT).

Belongs to the pyruvate, phosphate/water dikinase regulatory protein family. PSRP subfamily.

The catalysed reaction is [pyruvate, water dikinase] + ADP = [pyruvate, water dikinase]-phosphate + AMP + H(+). The enzyme catalyses [pyruvate, water dikinase]-phosphate + phosphate + H(+) = [pyruvate, water dikinase] + diphosphate. In terms of biological role, bifunctional serine/threonine kinase and phosphorylase involved in the regulation of the phosphoenolpyruvate synthase (PEPS) by catalyzing its phosphorylation/dephosphorylation. This chain is Putative phosphoenolpyruvate synthase regulatory protein, found in Burkholderia mallei (strain NCTC 10247).